Here is a 285-residue protein sequence, read N- to C-terminus: 2-dehydro-3-deoxyphosphooctonate aldolase (285 aa).

Belongs to the KdsA family.

The protein resides in the cytoplasm. The catalysed reaction is D-arabinose 5-phosphate + phosphoenolpyruvate + H2O = 3-deoxy-alpha-D-manno-2-octulosonate-8-phosphate + phosphate. It participates in carbohydrate biosynthesis; 3-deoxy-D-manno-octulosonate biosynthesis; 3-deoxy-D-manno-octulosonate from D-ribulose 5-phosphate: step 2/3. It functions in the pathway bacterial outer membrane biogenesis; lipopolysaccharide biosynthesis. This chain is 2-dehydro-3-deoxyphosphooctonate aldolase, found in Variovorax paradoxus (strain S110).